The following is a 345-amino-acid chain: Ketol-acid reductoisomerase (NADP(+)) (345 aa).

One can recognise a KARI N-terminal Rossmann domain in the interval 2-182 (AKVYHDSSAD…GTTRAGVLET (181 aa)). NADP(+) contacts are provided by residues 25 to 28 (YGSQ), arginine 48, serine 51, serine 53, and 83 to 86 (DTEQ). The active site involves histidine 108. Position 134 (glycine 134) interacts with NADP(+). A KARI C-terminal knotted domain is found at 183 to 328 (TFKEETETDL…AQLRDMMTFL (146 aa)). Positions 191, 195, 227, and 231 each coordinate Mg(2+). Serine 252 provides a ligand contact to substrate.

It belongs to the ketol-acid reductoisomerase family. It depends on Mg(2+) as a cofactor.

It catalyses the reaction (2R)-2,3-dihydroxy-3-methylbutanoate + NADP(+) = (2S)-2-acetolactate + NADPH + H(+). The catalysed reaction is (2R,3R)-2,3-dihydroxy-3-methylpentanoate + NADP(+) = (S)-2-ethyl-2-hydroxy-3-oxobutanoate + NADPH + H(+). The protein operates within amino-acid biosynthesis; L-isoleucine biosynthesis; L-isoleucine from 2-oxobutanoate: step 2/4. It functions in the pathway amino-acid biosynthesis; L-valine biosynthesis; L-valine from pyruvate: step 2/4. Its function is as follows. Involved in the biosynthesis of branched-chain amino acids (BCAA). Catalyzes an alkyl-migration followed by a ketol-acid reduction of (S)-2-acetolactate (S2AL) to yield (R)-2,3-dihydroxy-isovalerate. In the isomerase reaction, S2AL is rearranged via a Mg-dependent methyl migration to produce 3-hydroxy-3-methyl-2-ketobutyrate (HMKB). In the reductase reaction, this 2-ketoacid undergoes a metal-dependent reduction by NADPH to yield (R)-2,3-dihydroxy-isovalerate. This Koribacter versatilis (strain Ellin345) protein is Ketol-acid reductoisomerase (NADP(+)).